Here is a 280-residue protein sequence, read N- to C-terminus: Lysosome-associated membrane glycoprotein 5 (280 aa).

The first 29 residues, M1–A29, serve as a signal peptide directing secretion. Residues E30–E235 lie on the Extracellular side of the membrane. 4 N-linked (GlcNAc...) asparagine glycosylation sites follow: N35, N53, N102, and N127. Residues T236 to Y256 form a helical membrane-spanning segment. Topologically, residues H257–G280 are cytoplasmic.

It belongs to the LAMP family. In terms of processing, glycosylated. In terms of tissue distribution, in brain, strongly expressed in the globus pallidus/ventral pallidum complex, the substantia nigra pars reticulata and the entopeduncular nucleus (at protein level). Expressed in the external plexiform layer of the olfactory bulb (at protein level). May be weakly expressed in neocortex and striatum (at protein level). Highly expressed in brain; not detected in other tissues tested. Detected in the cingulate cortex, cortical plate and caudate putamen. In neocortex, specifically expressed in neurons of layers II/III and V.

The protein localises to the cytoplasmic vesicle membrane. It localises to the cell membrane. The protein resides in the cell projection. Its subcellular location is the dendrite. It is found in the cytoplasmic vesicle. The protein localises to the secretory vesicle. It localises to the synaptic vesicle membrane. The protein resides in the growth cone membrane. Its subcellular location is the early endosome membrane. It is found in the recycling endosome. The protein localises to the endoplasmic reticulum-Golgi intermediate compartment membrane. It localises to the endosome membrane. In terms of biological role, plays a role in short-term synaptic plasticity in a subset of GABAergic neurons in the brain. In Mus musculus (Mouse), this protein is Lysosome-associated membrane glycoprotein 5 (Lamp5).